The primary structure comprises 759 residues: uncharacterized protein (759 aa).

Residues 352–556 (VIQKLSDYAF…KDEDIADFSI (205 aa)) form the MCM domain. 397-404 (SDPGVGKS) is a binding site for ATP.

This sequence belongs to the MCM family.

This is an uncharacterized protein from Methanocaldococcus jannaschii (strain ATCC 43067 / DSM 2661 / JAL-1 / JCM 10045 / NBRC 100440) (Methanococcus jannaschii).